The sequence spans 284 residues: Homeobox protein SMOX-5 (284 aa).

Residues 37 to 96 constitute a DNA-binding region (homeobox); sequence RRKTRTTFSNCQLNELENNFNRQRYLTPTDRDRIAKHLGLTNTQVITWFQNRRAKLKREA. The disordered stretch occupies residues 117-172; the sequence is LSLSDHDHEETQIDDENEQGDNNNDDDGDDNDVEEDDGEEQEKNHTKYLTQPPSIS. Over residues 128 to 156 the composition is skewed to acidic residues; sequence QIDDENEQGDNNNDDDGDDNDVEEDDGEE.

It is found in the nucleus. The chain is Homeobox protein SMOX-5 (SMOX-5) from Schistosoma mansoni (Blood fluke).